Consider the following 784-residue polypeptide: Cadherin-15 (784 aa).

Positions 1 to 21 (MGSALLLALGLLAQSLGLSWA) are cleaved as a signal peptide. Residues 22-59 (VPEPKPSTLYPWRRASAPGRVRRAWVIPPISVSENHKR) constitute a propeptide that is removed on maturation. 5 consecutive Cadherin domains span residues 60–151 (LPYP…RPAF), 152–259 (LQDV…APEF), 260–374 (TKDE…APVF), 375–480 (PENP…DHAP), and 481–589 (ALAL…TCLP). The Extracellular segment spans residues 60–605 (LPYPLVQIKS…GGGVGVSLGA (546 aa)). Residues Asn-106 and Asn-226 are each glycosylated (N-linked (GlcNAc...) asparagine). 3 N-linked (GlcNAc...) asparagine glycosylation sites follow: Asn-530, Asn-537, and Asn-575. The helical transmembrane segment at 606 to 625 (LVIVLASTVVLLVLILLAAL) threads the bilayer. Over 626–784 (RTRFRGHSRG…ARLADMYGHQ (159 aa)) the chain is Cytoplasmic. Residues 676–700 (EPRATSRSLGRPPLRRDAPFSYVPQ) form a disordered region.

As to expression, skeletal muscle.

It is found in the cell membrane. Functionally, cadherins are calcium-dependent cell adhesion proteins. They preferentially interact with themselves in a homophilic manner in connecting cells; cadherins may thus contribute to the sorting of heterogeneous cell types. M-cadherin is part of the myogenic program and may provide a trigger for terminal muscle differentiation. This chain is Cadherin-15 (Cdh15), found in Mus musculus (Mouse).